Reading from the N-terminus, the 271-residue chain is Dipeptidyl-peptidase 6 (271 aa).

SH3b domains are found at residues 1–64 (MNAI…LFDD) and 72–140 (QKAQ…HPKI). The 121-residue stretch at 148–268 (HAFRENVVQT…DLATTITAIG (121 aa)) folds into the NlpC/P60 domain. Cys-178 serves as the catalytic Nucleophile. His-224 functions as the Proton acceptor in the catalytic mechanism. His-236 is a catalytic residue.

This sequence belongs to the peptidase C40 family.

The protein localises to the cytoplasm. Involved in cell sporulation. Hydrolyzes gamma-D-Glu-L-(meso)A2pm linkages only in those peptide units that have a free N-terminal L-alanine. In Lysinibacillus sphaericus (Bacillus sphaericus), this protein is Dipeptidyl-peptidase 6.